A 390-amino-acid chain; its full sequence is Succinate--CoA ligase [ADP-forming] subunit beta (390 aa).

Residues 9–248 enclose the ATP-grasp domain; it reads KEILRRHKAN…ITEEDPLEVQ (240 aa). ATP is bound by residues Lys-50, 57-59, Glu-103, Ile-106, and Glu-111; that span reads GRG. Residues Asn-203 and Asp-217 each coordinate Mg(2+). Substrate contacts are provided by residues Asn-268 and 325 to 327; that span reads GIV.

Belongs to the succinate/malate CoA ligase beta subunit family. Heterotetramer of two alpha and two beta subunits. Mg(2+) serves as cofactor.

It carries out the reaction succinate + ATP + CoA = succinyl-CoA + ADP + phosphate. The enzyme catalyses GTP + succinate + CoA = succinyl-CoA + GDP + phosphate. It functions in the pathway carbohydrate metabolism; tricarboxylic acid cycle; succinate from succinyl-CoA (ligase route): step 1/1. In terms of biological role, succinyl-CoA synthetase functions in the citric acid cycle (TCA), coupling the hydrolysis of succinyl-CoA to the synthesis of either ATP or GTP and thus represents the only step of substrate-level phosphorylation in the TCA. The beta subunit provides nucleotide specificity of the enzyme and binds the substrate succinate, while the binding sites for coenzyme A and phosphate are found in the alpha subunit. This chain is Succinate--CoA ligase [ADP-forming] subunit beta, found in Leptospira interrogans serogroup Icterohaemorrhagiae serovar copenhageni (strain Fiocruz L1-130).